The following is a 255-amino-acid chain: Ribonuclease HII (255 aa).

The RNase H type-2 domain occupies 72–255; sequence AIICGIDEVG…KSFEPIKSLL (184 aa). A divalent metal cation-binding residues include Asp78, Glu79, and Asp170.

It belongs to the RNase HII family. Mn(2+) serves as cofactor. It depends on Mg(2+) as a cofactor.

It localises to the cytoplasm. It carries out the reaction Endonucleolytic cleavage to 5'-phosphomonoester.. Its function is as follows. Endonuclease that specifically degrades the RNA of RNA-DNA hybrids. In Staphylococcus aureus (strain MRSA252), this protein is Ribonuclease HII.